The following is a 506-amino-acid chain: Cysteine--tRNA ligase (506 aa).

C43 provides a ligand contact to Zn(2+). A 'HIGH' region motif is present at residues 45–55 (VTVYDLCHLGH). Zn(2+)-binding residues include C237, H262, and E266. The short motif at 294-298 (KMSKS) is the 'KMSKS' region element. Residue K297 coordinates ATP.

It belongs to the class-I aminoacyl-tRNA synthetase family. As to quaternary structure, monomer. It depends on Zn(2+) as a cofactor.

It localises to the cytoplasm. It carries out the reaction tRNA(Cys) + L-cysteine + ATP = L-cysteinyl-tRNA(Cys) + AMP + diphosphate. This is Cysteine--tRNA ligase from Synechococcus sp. (strain JA-3-3Ab) (Cyanobacteria bacterium Yellowstone A-Prime).